We begin with the raw amino-acid sequence, 322 residues long: MLNSFKLSLQYILPKLWLTRLAGWGASKRAGWLTKLVIDLFVKYYKVDMTEAQKPDTASYRTFNDFFVRPLRDDVRPLNTDPNILVMPADGVISQLGRIEEDKILQAKGHNYSLEALLAGNYLMADKFRNGTFVTTYLSPRDYHRVHMPCNGILREMIYVPGDLFSVNHLTAQNVPNLFARNERVICLFDTEFGPMAQILVGATIVGSIETVWAGTITPPREGIIKRWTWPEGEHEGSVALLKGQEMGRFKLGSTVINLFAPGKVNLIASLASLSVTKIGQPLATSTETFVAPEVEPAPLPADEIKAEHDASPLVDNKKDDT.

Residues aspartate 90, histidine 147, and serine 254 each act as charge relay system; for autoendoproteolytic cleavage activity in the active site. Serine 254 acts as the Schiff-base intermediate with substrate; via pyruvic acid; for decarboxylase activity in catalysis. Serine 254 is subject to Pyruvic acid (Ser); by autocatalysis. Residues 294-322 (EVEPAPLPADEIKAEHDASPLVDNKKDDT) form a disordered region. Basic and acidic residues predominate over residues 303-322 (DEIKAEHDASPLVDNKKDDT).

The protein belongs to the phosphatidylserine decarboxylase family. PSD-B subfamily. Prokaryotic type I sub-subfamily. In terms of assembly, heterodimer of a large membrane-associated beta subunit and a small pyruvoyl-containing alpha subunit. Requires pyruvate as cofactor. In terms of processing, is synthesized initially as an inactive proenzyme. Formation of the active enzyme involves a self-maturation process in which the active site pyruvoyl group is generated from an internal serine residue via an autocatalytic post-translational modification. Two non-identical subunits are generated from the proenzyme in this reaction, and the pyruvate is formed at the N-terminus of the alpha chain, which is derived from the carboxyl end of the proenzyme. The autoendoproteolytic cleavage occurs by a canonical serine protease mechanism, in which the side chain hydroxyl group of the serine supplies its oxygen atom to form the C-terminus of the beta chain, while the remainder of the serine residue undergoes an oxidative deamination to produce ammonia and the pyruvoyl prosthetic group on the alpha chain. During this reaction, the Ser that is part of the protease active site of the proenzyme becomes the pyruvoyl prosthetic group, which constitutes an essential element of the active site of the mature decarboxylase.

Its subcellular location is the cell membrane. It catalyses the reaction a 1,2-diacyl-sn-glycero-3-phospho-L-serine + H(+) = a 1,2-diacyl-sn-glycero-3-phosphoethanolamine + CO2. It functions in the pathway phospholipid metabolism; phosphatidylethanolamine biosynthesis; phosphatidylethanolamine from CDP-diacylglycerol: step 2/2. In terms of biological role, catalyzes the formation of phosphatidylethanolamine (PtdEtn) from phosphatidylserine (PtdSer). In Salmonella paratyphi C (strain RKS4594), this protein is Phosphatidylserine decarboxylase proenzyme.